Here is a 138-residue protein sequence, read N- to C-terminus: Small ribosomal subunit protein uS11 (138 aa).

The segment covering 1-12 (MPPKKANAAGPK) has biased composition (low complexity). Positions 1–23 (MPPKKANAAGPKKGQKTRKREKK) are disordered. A compositionally biased stretch (basic residues) spans 13 to 22 (KGQKTRKREK).

It belongs to the universal ribosomal protein uS11 family. As to quaternary structure, part of the 30S ribosomal subunit. Interacts with proteins S7 and S18. Binds to IF-3.

In terms of biological role, located on the platform of the 30S subunit, it bridges several disparate RNA helices of the 16S rRNA. Forms part of the Shine-Dalgarno cleft in the 70S ribosome. The chain is Small ribosomal subunit protein uS11 from Mycobacterium leprae (strain Br4923).